A 79-amino-acid chain; its full sequence is Mycoredoxin 1 (79 aa).

The Glutaredoxin domain occupies 1–79; sequence MSNVTIYATD…EVIAKIEALA (79 aa).

This sequence belongs to the glutaredoxin family.

The protein resides in the cytoplasm. The catalysed reaction is [mycoredoxin]-L-cysteine + arseno-mycothiol + H(+) = [mycoredoxin]-S-mycothiol-L-cysteine + arsenite. Functionally, involved in defense against toxic arsenate. Involved in the mycothiol/myoredoxin redox pathway which uses a mycothioltransferase mechanism; functions as a monothiol mixed disulfide reductase and is recycled by a second mycothiol forming mycothione which in turn is reduced in a NADPH-dependent manner. This chain is Mycoredoxin 1 (mrx1), found in Corynebacterium glutamicum (strain ATCC 13032 / K051).